A 720-amino-acid polypeptide reads, in one-letter code: 1,4-alpha-glucan branching enzyme GlgB (720 aa).

D400 functions as the Nucleophile in the catalytic mechanism. E453 serves as the catalytic Proton donor.

Belongs to the glycosyl hydrolase 13 family. GlgB subfamily. Monomer.

It carries out the reaction Transfers a segment of a (1-&gt;4)-alpha-D-glucan chain to a primary hydroxy group in a similar glucan chain.. It participates in glycan biosynthesis; glycogen biosynthesis. Its function is as follows. Catalyzes the formation of the alpha-1,6-glucosidic linkages in glycogen by scission of a 1,4-alpha-linked oligosaccharide from growing alpha-1,4-glucan chains and the subsequent attachment of the oligosaccharide to the alpha-1,6 position. The protein is 1,4-alpha-glucan branching enzyme GlgB of Chlamydia pneumoniae (Chlamydophila pneumoniae).